We begin with the raw amino-acid sequence, 199 residues long: Probable GTP-binding protein EngB (199 aa).

The EngB-type G domain occupies Asp28–Val199. Residues Gly36–Ser43, Gly63–Leu67, Asp81–Gly84, Thr148–Asp151, and Phe180–Ser182 contribute to the GTP site. Mg(2+)-binding residues include Ser43 and Thr65.

Belongs to the TRAFAC class TrmE-Era-EngA-EngB-Septin-like GTPase superfamily. EngB GTPase family. Mg(2+) is required as a cofactor.

Its function is as follows. Necessary for normal cell division and for the maintenance of normal septation. The protein is Probable GTP-binding protein EngB of Streptococcus pyogenes serotype M3 (strain SSI-1).